Consider the following 236-residue polypeptide: Rho-related GTP-binding protein RhoV (236 aa).

Residues Met-1–Ser-27 are disordered. Position 25 is a phosphoserine (Ser-25). GTP is bound by residues Gly-38–Ser-45, Asp-85–Gln-89, and Thr-143–Asp-146. Cys-234 carries the S-palmitoyl cysteine lipid modification.

This sequence belongs to the small GTPase superfamily. Rho family. As to quaternary structure, interacts with PAK2. Mg(2+) serves as cofactor.

The protein resides in the cell membrane. It is found in the endosome membrane. Its function is as follows. Plays a role in the control of the actin cytoskeleton via activation of the JNK pathway. This is Rho-related GTP-binding protein RhoV from Bos taurus (Bovine).